Reading from the N-terminus, the 1312-residue chain is Rho GTPase-activating protein gacG (1312 aa).

6 disordered regions span residues 52 to 74, 111 to 158, 314 to 519, 762 to 831, 1185 to 1230, and 1282 to 1312; these read VENN…KRSQ, SNNN…SSSD, ISSS…PRNF, NSIS…SSTG, NNNN…SSSV, and TGTS…IVEE. Low complexity-rich tracts occupy residues 53-67 and 111-146; these read ENNN…NSEN and SNNN…YSPR. Polar residues predominate over residues 147-158; it reads NNNNNFTESSSD. Low complexity-rich tracts occupy residues 328–355, 373–397, and 414–436; these read TTAA…ANNS, HHSS…IGNS, and LNLT…NNGN. Residues 437–449 are compositionally biased toward polar residues; that stretch reads EVIQSSSSTSSPR. Positions 479-507 are enriched in low complexity; that stretch reads SSTNSLNNSTSSLKSSNNNILQQQQQQQQ. Composition is skewed to polar residues over residues 508–518 and 763–776; these read HYDSAPTTPRN and SIST…GNIA. Positions 792 to 816 are enriched in low complexity; that stretch reads NNNNNNNNNNNNNNNNNNNNNNNNN. The region spanning 1030 to 1212 is the Rho-GAP domain; sequence SKIDPITGFN…HHNSHHHRDN (183 aa). The span at 1196–1210 shows a compositional bias: basic residues; sequence HHHHHHHHHNSHHHR. Low complexity-rich tracts occupy residues 1213 to 1222 and 1282 to 1305; these read NNNNSNNNSS and TGTS…RSPS.

It is found in the cytoplasm. Functionally, rho GTPase-activating protein involved in the signal transduction pathway. The polypeptide is Rho GTPase-activating protein gacG (gacG) (Dictyostelium discoideum (Social amoeba)).